The sequence spans 857 residues: Major vault protein (857 aa).

8 MVP repeats span residues 18–60, 62–122, 123–174, 175–227, 228–282, 284–332, 333–387, and 388–441; these read PYYY…ITIP, RHYC…KVVQ, ANAA…TIIR, PNQA…YVLT, EKNA…NTLT, RQYC…FILG, EDEG…IPLD, and ENEG…VAER. The disordered stretch occupies residues 434–453; it reads AKDPVAERSDRRGDRAAPRA. Positions 437–453 are enriched in basic and acidic residues; sequence PVAERSDRRGDRAAPRA. An IQ domain is found at 665 to 694; it reads ARHEAERLEQEARGRLERQKIMDEAEAEKS.

The vault ribonucleoprotein particle is a huge (400 A x 670 A) cage structure of 12.9 MDa. It consists of a dimer of half-vaults, with each half-vault comprising 39 identical major vault protein (MVP) chains, PARP4 and one or more vault RNAs (vRNAs). In terms of tissue distribution, expressed in embryos, tube feet and coelomocytes (at protein level). Not expressed in sperm cells (at protein level).

It localises to the cytoplasm. Its subcellular location is the nucleus. Required for normal vault structure. Vaults are multi-subunit structures that may act as scaffolds for proteins involved in signal transduction. Vaults may also play a role in nucleo-cytoplasmic transport. This chain is Major vault protein, found in Strongylocentrotus purpuratus (Purple sea urchin).